The following is an 816-amino-acid chain: Ribonucleoside-diphosphate reductase large subunit (816 aa).

The ATP-cone domain occupies 1–92; sequence MYVVKRDGRQ…VSNLHKNTKK (92 aa). ATP-binding positions include 5 to 6, 11 to 17, threonine 53, and aspartate 57; these read KR and ETVHFDK. GDP is bound by residues serine 202 and serine 217. A disulfide bridge connects residues cysteine 218 and cysteine 444. DTTP-binding positions include 226–228, lysine 243, arginine 256, and 263–264; these read DSI and RG. Asparagine 427 is a GDP binding site. Asparagine 427 (proton acceptor) is an active-site residue. Residue cysteine 429 is the Cysteine radical intermediate of the active site. Residues glutamate 431 and 623 to 626 each bind GDP; that span reads TAST. Residue glutamate 431 is the Proton acceptor of the active site.

This sequence belongs to the ribonucleoside diphosphate reductase large chain family. In terms of assembly, heterotetramer of two large/R1 and two small/R2 subunits. A radical transfer pathway may occur between 'Tyr-125' of protein R2 and R1. In terms of processing, contains a disulfide bonds. Binding of the substrate occurs primarily when the active-site cysteines are reduced. In terms of tissue distribution, highly expressed in actively growing tissues such as young leaves, shoot apices, inflorescences and carpels. Very low expression in cotyledons, adult and cauline leaves and senescent leaves.

Its subcellular location is the cytoplasm. It catalyses the reaction a 2'-deoxyribonucleoside 5'-diphosphate + [thioredoxin]-disulfide + H2O = a ribonucleoside 5'-diphosphate + [thioredoxin]-dithiol. Under complex allosteric control mediated by deoxynucleoside triphosphates and ATP binding to separate specificity and activation sites on the large subunit. The type of nucleotide bound at the specificity site determines substrate preference. It seems probable that ATP makes the enzyme reduce CDP and UDP, dGTP favors ADP reduction and dTTP favors GDP reduction. Stimulated by ATP and inhibited by dATP binding to the activity site. Its function is as follows. Provides the precursors necessary for DNA synthesis. Catalyzes the biosynthesis of deoxyribonucleotides from the corresponding ribonucleotides. R1 contains the binding sites for both substrates and allosteric effectors and carries out the actual reduction of the ribonucleotide. Ribonucleotide reductase (RNR) complex function is essential for efficient organellar DNA degradation in pollen. Involved in chloroplast division. The sequence is that of Ribonucleoside-diphosphate reductase large subunit from Arabidopsis thaliana (Mouse-ear cress).